A 309-amino-acid polypeptide reads, in one-letter code: Porphobilinogen deaminase (309 aa).

Cys242 is subject to S-(dipyrrolylmethanemethyl)cysteine.

This sequence belongs to the HMBS family. Monomer. Requires dipyrromethane as cofactor.

The enzyme catalyses 4 porphobilinogen + H2O = hydroxymethylbilane + 4 NH4(+). Its pathway is porphyrin-containing compound metabolism; protoporphyrin-IX biosynthesis; coproporphyrinogen-III from 5-aminolevulinate: step 2/4. Tetrapolymerization of the monopyrrole PBG into the hydroxymethylbilane pre-uroporphyrinogen in several discrete steps. The polypeptide is Porphobilinogen deaminase (Legionella pneumophila subsp. pneumophila (strain Philadelphia 1 / ATCC 33152 / DSM 7513)).